Reading from the N-terminus, the 133-residue chain is Antifungal protein ginkbilobin-like protein 2 (133 aa).

Residues M1–G24 form the signal peptide. The 106-residue stretch at T28–I133 folds into the Gnk2-homologous domain. Residue N36 participates in alpha-D-mannopyranose binding. Disulfide bonds link C87–C96 and C99–C124. 2 residues coordinate alpha-D-mannopyranose: R118 and E129.

Its function is as follows. Exerts antifungal activity through its carbohydrate-binding specificity. The polypeptide is Antifungal protein ginkbilobin-like protein 2 (Picea glauca (White spruce)).